Reading from the N-terminus, the 900-residue chain is Chaperone protein ClpB 2 (900 aa).

Residues 15-154 (PDRFSDPAWE…ESLLRQPSVS (140 aa)) form the Clp R domain. 2 repeat regions span residues 18 to 81 (FSDP…LADQ) and 91 to 154 (IGED…PSVS). Residues 151-183 (PSVSPAPAPPPVPTAASAPAPTPRSAPAPRVMA) are disordered. The segment covering 154–163 (SPAPAPPPVP) has biased composition (pro residues). The interval 191–376 (ELEREPSALE…RRFQQVLIRE (186 aa)) is NBD1. 244 to 251 (GEPGVGKT) is an ATP binding site. Residues 377–581 (PDLELSLEIL…IADLVARWTG (205 aa)) are linker. Positions 427 to 557 (IDLIDEAAAQ…LEASQAEAQS (131 aa)) form a coiled coil. An NBD2 region spans residues 591-803 (ERRKLLALES…RIDEVIRFRP (213 aa)). ATP is bound at residue 641–648 (GPTGVGKT). The segment at 804 to 900 (LKVKDLVRIV…GASLEFEPLE (97 aa)) is C-terminal.

The protein belongs to the ClpA/ClpB family. As to quaternary structure, homohexamer. The oligomerization is ATP-dependent.

It localises to the cytoplasm. Functionally, part of a stress-induced multi-chaperone system, it is involved in the recovery of the cell from heat-induced damage, in cooperation with DnaK, DnaJ and GrpE. Acts before DnaK, in the processing of protein aggregates. Protein binding stimulates the ATPase activity; ATP hydrolysis unfolds the denatured protein aggregates, which probably helps expose new hydrophobic binding sites on the surface of ClpB-bound aggregates, contributing to the solubilization and refolding of denatured protein aggregates by DnaK. The polypeptide is Chaperone protein ClpB 2 (clpB2) (Parasynechococcus marenigrum (strain WH8102)).